The primary structure comprises 971 residues: Kinesin-like protein KIN-14C (971 aa).

Positions 14–119 constitute a Calponin-homology (CH) domain; the sequence is ANRRAEVIDW…CLLALKDNVA (106 aa). The stretch at 272–357 forms a coiled coil; the sequence is IKALETLVNG…QMETKARQME (86 aa). Residues 472-799 form the Kinesin motor domain; that stretch reads NIRVYCRVRP…LKFAERVSGV (328 aa). Position 556–563 (556–563) interacts with ATP; that stretch reads GQTGSGKT. Positions 809 to 844 form a coiled coil; it reads EGKDIKELLEQVASLKDTIARKDMEIEQLQLLKSKS. The segment covering 839-881 has biased composition (polar residues); that stretch reads LLKSKSPNSMTDRNGSNLLRQSTSSTGLSSLPVASQQNQQLSG. The interval 839-971 is disordered; sequence LLKSKSPNSM…GSLAKPSKRR (133 aa).

It belongs to the TRAFAC class myosin-kinesin ATPase superfamily. Kinesin family. KIN-14 subfamily.

This chain is Kinesin-like protein KIN-14C, found in Oryza sativa subsp. japonica (Rice).